The following is a 66-amino-acid chain: Large ribosomal subunit protein bL35 (66 aa).

Positions M1–R26 are enriched in basic residues. 2 disordered regions span residues M1 to Y28 and K36 to Q55.

It belongs to the bacterial ribosomal protein bL35 family.

In Macrococcus caseolyticus (strain JCSC5402) (Macrococcoides caseolyticum), this protein is Large ribosomal subunit protein bL35.